A 332-amino-acid chain; its full sequence is Phosphate acyltransferase (332 aa).

It belongs to the PlsX family. Homodimer. Probably interacts with PlsY.

Its subcellular location is the cytoplasm. It catalyses the reaction a fatty acyl-[ACP] + phosphate = an acyl phosphate + holo-[ACP]. Its pathway is lipid metabolism; phospholipid metabolism. Catalyzes the reversible formation of acyl-phosphate (acyl-PO(4)) from acyl-[acyl-carrier-protein] (acyl-ACP). This enzyme utilizes acyl-ACP as fatty acyl donor, but not acyl-CoA. The polypeptide is Phosphate acyltransferase (Streptococcus sanguinis (strain SK36)).